Here is a 340-residue protein sequence, read N- to C-terminus: Probable tRNA pseudouridine synthase B (340 aa).

The active-site Nucleophile is Asp82. Residues 250–325 enclose the PUA domain; sequence LPKVWIKDSA…IAVDVEKVFM (76 aa).

It belongs to the pseudouridine synthase TruB family. Type 2 subfamily.

The enzyme catalyses uridine(55) in tRNA = pseudouridine(55) in tRNA. Functionally, could be responsible for synthesis of pseudouridine from uracil-55 in the psi GC loop of transfer RNAs. The polypeptide is Probable tRNA pseudouridine synthase B (Pyrococcus furiosus (strain ATCC 43587 / DSM 3638 / JCM 8422 / Vc1)).